Reading from the N-terminus, the 608-residue chain is Protein SHQ1 homolog (608 aa).

Disordered regions lie at residues 487–531 and 543–608; these read DAGS…SFYS and IVYE…ASTT. A compositionally biased stretch (low complexity) spans 489-498; the sequence is GSQGSSPQQQ. Acidic residues-rich tracts occupy residues 502 to 524 and 543 to 579; these read DDLDLDNDTSGQEDETTTDDESV and IVYEDDEEDEDDDEDGDDDEDGDGDEDEDEDEDEDDS. Positions 588–608 are enriched in polar residues; the sequence is EAEGNSVIEQCSNSETAASTT.

It belongs to the SHQ1 family.

Its function is as follows. Required for the quantitative accumulation of H/ACA ribonucleoproteins (RNPs). The sequence is that of Protein SHQ1 homolog from Drosophila melanogaster (Fruit fly).